We begin with the raw amino-acid sequence, 101 residues long: Small ribosomal subunit protein uS14 (101 aa).

The protein belongs to the universal ribosomal protein uS14 family. In terms of assembly, part of the 30S ribosomal subunit. Contacts proteins S3 and S10.

Functionally, binds 16S rRNA, required for the assembly of 30S particles and may also be responsible for determining the conformation of the 16S rRNA at the A site. The polypeptide is Small ribosomal subunit protein uS14 (Acinetobacter baumannii (strain AB307-0294)).